Reading from the N-terminus, the 522-residue chain is Peptide chain release factor 3 (522 aa).

The region spanning 10–277 (ASRKTFAIIS…TFVDFAPAPS (268 aa)) is the tr-type G domain. GTP-binding positions include 19 to 26 (SHPDAGKT), 87 to 91 (DTPGH), and 141 to 144 (NKMD).

This sequence belongs to the TRAFAC class translation factor GTPase superfamily. Classic translation factor GTPase family. PrfC subfamily.

The protein localises to the cytoplasm. Its function is as follows. Increases the formation of ribosomal termination complexes and stimulates activities of RF-1 and RF-2. It binds guanine nucleotides and has strong preference for UGA stop codons. It may interact directly with the ribosome. The stimulation of RF-1 and RF-2 is significantly reduced by GTP and GDP, but not by GMP. This is Peptide chain release factor 3 from Listeria monocytogenes serovar 1/2a (strain ATCC BAA-679 / EGD-e).